Consider the following 226-residue polypeptide: Lipoprotein-releasing system ATP-binding protein LolD (226 aa).

Positions 5-226 (LKATNINKIY…LLRNGHWENY (222 aa)) constitute an ABC transporter domain. 41–48 (GTSGSGKS) lines the ATP pocket.

This sequence belongs to the ABC transporter superfamily. Lipoprotein translocase (TC 3.A.1.125) family. In terms of assembly, the complex is composed of two ATP-binding proteins (LolD) and two transmembrane proteins (LolC and LolE).

The protein resides in the cell inner membrane. Its function is as follows. Part of the ABC transporter complex LolCDE involved in the translocation of mature outer membrane-directed lipoproteins, from the inner membrane to the periplasmic chaperone, LolA. Responsible for the formation of the LolA-lipoprotein complex in an ATP-dependent manner. The chain is Lipoprotein-releasing system ATP-binding protein LolD from Psychrobacter arcticus (strain DSM 17307 / VKM B-2377 / 273-4).